The following is a 268-amino-acid chain: Thymidylate synthase (268 aa).

Position 27 (Arg27) interacts with dUMP. His57 provides a ligand contact to (6R)-5,10-methylene-5,6,7,8-tetrahydrofolate. 132 to 133 (RR) is a binding site for dUMP. Cys152 functions as the Nucleophile in the catalytic mechanism. Residues 172-175 (RSAD), Asn183, and 213-215 (HVY) contribute to the dUMP site. (6R)-5,10-methylene-5,6,7,8-tetrahydrofolate is bound at residue Asp175. (6R)-5,10-methylene-5,6,7,8-tetrahydrofolate is bound at residue Ala267.

It belongs to the thymidylate synthase family. Bacterial-type ThyA subfamily. As to quaternary structure, homodimer.

Its subcellular location is the cytoplasm. The enzyme catalyses dUMP + (6R)-5,10-methylene-5,6,7,8-tetrahydrofolate = 7,8-dihydrofolate + dTMP. It functions in the pathway pyrimidine metabolism; dTTP biosynthesis. Catalyzes the reductive methylation of 2'-deoxyuridine-5'-monophosphate (dUMP) to 2'-deoxythymidine-5'-monophosphate (dTMP) while utilizing 5,10-methylenetetrahydrofolate (mTHF) as the methyl donor and reductant in the reaction, yielding dihydrofolate (DHF) as a by-product. This enzymatic reaction provides an intracellular de novo source of dTMP, an essential precursor for DNA biosynthesis. The chain is Thymidylate synthase from Kineococcus radiotolerans (strain ATCC BAA-149 / DSM 14245 / SRS30216).